The following is a 64-amino-acid chain: Alpha-conotoxin GI (64 aa).

An N-terminal signal peptide occupies residues Met-1–Ser-21. Positions Phe-22–Lys-49 are excised as a propeptide. Intrachain disulfides connect Cys-51–Cys-56 and Cys-52–Cys-62. At Cys-62 the chain carries Cysteine amide.

This sequence belongs to the conotoxin A superfamily. Not hydroxylated; hydroxylation, on a synthetic hydroxylated GI, improves its folding but impairs its activity against target receptors. Expressed by the venom duct.

Its subcellular location is the secreted. Alpha-conotoxins act on postsynaptic membranes, they bind to the nicotinic acetylcholine receptors (nAChR) and thus inhibit them. Reversibly inhibits mammalian muscle nAChR (IC(50)=339 nM on adult subtype (alpha-1-beta-1-gamma-delta/CHRNA1-CHRNB1-CHRNG-CHRND) and IC(50)=5.86-995 nM on fetal subtype (alpha-1-beta-1-delta-epsilon/CHRNA1-CHRNB1-CHRND-CHRNE)). The higher affinity site is the alpha/delta site on mouse muscle-derived BC3H-1 receptor, and the other site (alpha/gamma site) on nicotinic receptors from Torpedo californica electric organ. This is Alpha-conotoxin GI from Conus geographus (Geography cone).